We begin with the raw amino-acid sequence, 457 residues long: Tubulin beta chain (457 aa).

8 residues coordinate GTP: Q11, E69, S138, G142, T143, G144, N204, and N226. E69 lines the Mg(2+) pocket. The segment at 431–457 (EGEEEEDAYAEGAVVNGDQSYEDQYAA) is disordered.

Belongs to the tubulin family. Dimer of alpha and beta chains. A typical microtubule is a hollow water-filled tube with an outer diameter of 25 nm and an inner diameter of 15 nM. Alpha-beta heterodimers associate head-to-tail to form protofilaments running lengthwise along the microtubule wall with the beta-tubulin subunit facing the microtubule plus end conferring a structural polarity. Microtubules usually have 13 protofilaments but different protofilament numbers can be found in some organisms and specialized cells. Mg(2+) is required as a cofactor.

It localises to the cytoplasm. It is found in the cytoskeleton. Its function is as follows. Tubulin is the major constituent of microtubules, a cylinder consisting of laterally associated linear protofilaments composed of alpha- and beta-tubulin heterodimers. Microtubules grow by the addition of GTP-tubulin dimers to the microtubule end, where a stabilizing cap forms. Below the cap, tubulin dimers are in GDP-bound state, owing to GTPase activity of alpha-tubulin. This chain is Tubulin beta chain (TUBB1), found in Porphyra purpurea (Red seaweed).